The sequence spans 191 residues: Large ribosomal subunit protein eL6 (191 aa).

It belongs to the eukaryotic ribosomal protein eL6 family.

The protein is Large ribosomal subunit protein eL6 (RPL6) of Tetrahymena thermophila (strain SB210).